The chain runs to 354 residues: 4-hydroxy-3-methylbut-2-en-1-yl diphosphate synthase (flavodoxin) (354 aa).

Positions 263, 266, 298, and 305 each coordinate [4Fe-4S] cluster.

This sequence belongs to the IspG family. [4Fe-4S] cluster is required as a cofactor.

The enzyme catalyses (2E)-4-hydroxy-3-methylbut-2-enyl diphosphate + oxidized [flavodoxin] + H2O + 2 H(+) = 2-C-methyl-D-erythritol 2,4-cyclic diphosphate + reduced [flavodoxin]. It functions in the pathway isoprenoid biosynthesis; isopentenyl diphosphate biosynthesis via DXP pathway; isopentenyl diphosphate from 1-deoxy-D-xylulose 5-phosphate: step 5/6. Functionally, converts 2C-methyl-D-erythritol 2,4-cyclodiphosphate (ME-2,4cPP) into 1-hydroxy-2-methyl-2-(E)-butenyl 4-diphosphate. The chain is 4-hydroxy-3-methylbut-2-en-1-yl diphosphate synthase (flavodoxin) from Fusobacterium nucleatum subsp. nucleatum (strain ATCC 25586 / DSM 15643 / BCRC 10681 / CIP 101130 / JCM 8532 / KCTC 2640 / LMG 13131 / VPI 4355).